A 276-amino-acid chain; its full sequence is Hydroxyethylthiazole kinase (276 aa).

Met-53 and Ala-202 together coordinate substrate.

It belongs to the Thz kinase family. Mg(2+) serves as cofactor.

The enzyme catalyses 5-(2-hydroxyethyl)-4-methylthiazole + ATP = 4-methyl-5-(2-phosphooxyethyl)-thiazole + ADP + H(+). It participates in cofactor biosynthesis; thiamine diphosphate biosynthesis; 4-methyl-5-(2-phosphoethyl)-thiazole from 5-(2-hydroxyethyl)-4-methylthiazole: step 1/1. Functionally, thiazole kinase involved in thiamine salvage pathway. This chain is Hydroxyethylthiazole kinase (THIM), found in Arabidopsis thaliana (Mouse-ear cress).